Reading from the N-terminus, the 224-residue chain is PKHD-type hydroxylase CYB_2270 (224 aa).

The region spanning 78–176 is the Fe2OG dioxygenase domain; that stretch reads LIHSILISCY…RYAAVSWVQS (99 aa). Residues His96, Asp98, and His157 each contribute to the Fe cation site. Arg167 is a 2-oxoglutarate binding site.

Requires Fe(2+) as cofactor. It depends on L-ascorbate as a cofactor.

The protein is PKHD-type hydroxylase CYB_2270 of Synechococcus sp. (strain JA-2-3B'a(2-13)) (Cyanobacteria bacterium Yellowstone B-Prime).